A 445-amino-acid chain; its full sequence is Acyl-CoA Delta-4 desaturase (445 aa).

Residues 19–96 (AGVYTWEEVQ…MKPLLVGELA (78 aa)) enclose the Cytochrome b5 heme-binding domain. Helical transmembrane passes span 132-152 (LFFLLHLGHILLLEALALLMV), 153-173 (WHWGTGWLQTLLCAVMLATAQ), 266-286 (YFFLVAPPLLIPVFYNYNIMM), and 307-327 (YMLCYVPVYGLFGSLALMMFA).

Belongs to the fatty acid desaturase type 1 family.

The protein resides in the membrane. It catalyses the reaction (8Z,11Z,14Z,17Z)-eicosatetraenoyl-CoA + 2 Fe(II)-[cytochrome b5] + O2 + 2 H(+) = (5Z,8Z,11Z,14Z,17Z)-eicosapentaenoyl-CoA + 2 Fe(III)-[cytochrome b5] + 2 H2O. The catalysed reaction is (7Z,10Z,13Z,16Z)-docosatetraenoyl-CoA + 2 Fe(II)-[cytochrome b5] + O2 + 2 H(+) = (4Z,7Z,10Z,13Z,16Z)-docosapentaenoyl-CoA + 2 Fe(III)-[cytochrome b5] + 2 H2O. It carries out the reaction (7Z,10Z,13Z,16Z,19Z)-docosapentaenoyl-CoA + 2 Fe(II)-[cytochrome b5] + O2 + 2 H(+) = (4Z,7Z,10Z,13Z,16Z,19Z)-docosahexaenoyl-CoA + 2 Fe(III)-[cytochrome b5] + 2 H2O. It functions in the pathway lipid metabolism; polyunsaturated fatty acid biosynthesis. In terms of biological role, fatty acid desaturase with bifunctional delta-4 and delta-5 activities. Component of a lipid metabolic pathway that catalyzes the biosynthesis of polyunsaturated fatty acids (PUFA) with preference toward n-3 substrates and Delta(4)function. This is Acyl-CoA Delta-4 desaturase from Siganus canaliculatus (White-spotted spinefoot).